We begin with the raw amino-acid sequence, 662 residues long: UvrABC system protein B (662 aa).

Positions 25-182 constitute a Helicase ATP-binding domain; the sequence is KGIEKREKFQ…KKLVEIQYER (158 aa). ATP is bound at residue 38-45; that stretch reads GVTGSGKT. Residues 91–114 carry the Beta-hairpin motif; it reads YYDYYQPEAYVAQSDTYIEKDASI. A Helicase C-terminal domain is found at 429-595; it reads QIDDLYTSIQ…TIIKDIREVI (167 aa). The region spanning 622-657 is the UVR domain; the sequence is DKLIEKYEEEMKEAAQNLQFEKAAHLRDVIYKLKKD.

Belongs to the UvrB family. In terms of assembly, forms a heterotetramer with UvrA during the search for lesions. Interacts with UvrC in an incision complex.

It is found in the cytoplasm. Functionally, the UvrABC repair system catalyzes the recognition and processing of DNA lesions. A damage recognition complex composed of 2 UvrA and 2 UvrB subunits scans DNA for abnormalities. Upon binding of the UvrA(2)B(2) complex to a putative damaged site, the DNA wraps around one UvrB monomer. DNA wrap is dependent on ATP binding by UvrB and probably causes local melting of the DNA helix, facilitating insertion of UvrB beta-hairpin between the DNA strands. Then UvrB probes one DNA strand for the presence of a lesion. If a lesion is found the UvrA subunits dissociate and the UvrB-DNA preincision complex is formed. This complex is subsequently bound by UvrC and the second UvrB is released. If no lesion is found, the DNA wraps around the other UvrB subunit that will check the other stand for damage. The polypeptide is UvrABC system protein B (Clostridium botulinum (strain Langeland / NCTC 10281 / Type F)).